The sequence spans 490 residues: Lysine--tRNA ligase (490 aa).

Mg(2+)-binding residues include E398 and E405.

The protein belongs to the class-II aminoacyl-tRNA synthetase family. Homodimer. Requires Mg(2+) as cofactor.

Its subcellular location is the cytoplasm. The enzyme catalyses tRNA(Lys) + L-lysine + ATP = L-lysyl-tRNA(Lys) + AMP + diphosphate. The sequence is that of Lysine--tRNA ligase from Metamycoplasma arthritidis (strain 158L3-1) (Mycoplasma arthritidis).